Consider the following 321-residue polypeptide: Beta-ketoacyl-[acyl-carrier-protein] synthase III (321 aa).

Residues cysteine 114 and histidine 248 contribute to the active site. Residues glutamine 249 to arginine 253 form an ACP-binding region. Residue asparagine 278 is part of the active site.

It belongs to the thiolase-like superfamily. FabH family. As to quaternary structure, homodimer.

Its subcellular location is the cytoplasm. The catalysed reaction is malonyl-[ACP] + acetyl-CoA + H(+) = 3-oxobutanoyl-[ACP] + CO2 + CoA. It functions in the pathway lipid metabolism; fatty acid biosynthesis. Functionally, catalyzes the condensation reaction of fatty acid synthesis by the addition to an acyl acceptor of two carbons from malonyl-ACP. Catalyzes the first condensation reaction which initiates fatty acid synthesis and may therefore play a role in governing the total rate of fatty acid production. Possesses both acetoacetyl-ACP synthase and acetyl transacylase activities. Its substrate specificity determines the biosynthesis of branched-chain and/or straight-chain of fatty acids. The sequence is that of Beta-ketoacyl-[acyl-carrier-protein] synthase III from Sphingopyxis alaskensis (strain DSM 13593 / LMG 18877 / RB2256) (Sphingomonas alaskensis).